We begin with the raw amino-acid sequence, 139 residues long: uncharacterized protein (139 aa).

2 consecutive transmembrane segments (helical) span residues 35–55 (AYFK…AAAA) and 119–139 (CCLF…VFCV).

It localises to the membrane. This is an uncharacterized protein from Saccharomyces cerevisiae (strain ATCC 204508 / S288c) (Baker's yeast).